The sequence spans 236 residues: MNSTPDTSSRPSIRALTLLEGRVLGVLVEKQHTVPDSYPLSLNALTLGCNQKTGRAPVMNATEAEVLTAVDGLKRLSLVMEGSSSRVPRFEHNMNRVLGLPSQSAALLTTLLLRGPQTAAELRLNSARLHGFADISSVEAFLDELAANDPPRVVKLARTPGERENRWTHLLCGEVSASELAQPGAEDDAVPLSAFEAVKAEQKRLADEVSRLQTVVRRMAAELGIDAGDLTAGEGA.

Belongs to the UPF0502 family.

The polypeptide is UPF0502 protein Bxeno_B1639 (Paraburkholderia xenovorans (strain LB400)).